The chain runs to 271 residues: Undecaprenyl-diphosphatase (271 aa).

8 consecutive transmembrane segments (helical) span residues 2–22, 42–62, 80–100, 108–128, 149–168, 175–195, 214–234, and 248–268; these read LLIL…FVPV, ANLF…VVYW, LRFW…GFSL, LFNP…MIIV, SIFV…SRSA, WIAG…AIPV, IEFI…LVVI, and IFAI…IFKI.

It belongs to the UppP family.

Its subcellular location is the cell membrane. It catalyses the reaction di-trans,octa-cis-undecaprenyl diphosphate + H2O = di-trans,octa-cis-undecaprenyl phosphate + phosphate + H(+). Catalyzes the dephosphorylation of undecaprenyl diphosphate (UPP). Confers resistance to bacitracin. The protein is Undecaprenyl-diphosphatase of Clostridium tetani (strain Massachusetts / E88).